A 475-amino-acid polypeptide reads, in one-letter code: Ribulose bisphosphate carboxylase large chain (475 aa).

Positions 1-2 are excised as a propeptide; the sequence is MS. An N-acetylproline modification is found at proline 3. Residues asparagine 123 and threonine 173 each coordinate substrate. The active-site Proton acceptor is the lysine 175. Lysine 177 is a binding site for substrate. Mg(2+) is bound by residues lysine 201, aspartate 203, and glutamate 204. Lysine 201 carries the N6-carboxylysine modification. Histidine 294 serves as the catalytic Proton acceptor. Substrate contacts are provided by arginine 295, histidine 327, and serine 379.

Belongs to the RuBisCO large chain family. Type I subfamily. As to quaternary structure, heterohexadecamer of 8 large chains and 8 small chains; disulfide-linked. The disulfide link is formed within the large subunit homodimers. Mg(2+) serves as cofactor. The disulfide bond which can form in the large chain dimeric partners within the hexadecamer appears to be associated with oxidative stress and protein turnover.

Its subcellular location is the plastid. The protein resides in the chloroplast. It catalyses the reaction 2 (2R)-3-phosphoglycerate + 2 H(+) = D-ribulose 1,5-bisphosphate + CO2 + H2O. The catalysed reaction is D-ribulose 1,5-bisphosphate + O2 = 2-phosphoglycolate + (2R)-3-phosphoglycerate + 2 H(+). Its function is as follows. RuBisCO catalyzes two reactions: the carboxylation of D-ribulose 1,5-bisphosphate, the primary event in carbon dioxide fixation, as well as the oxidative fragmentation of the pentose substrate in the photorespiration process. Both reactions occur simultaneously and in competition at the same active site. The chain is Ribulose bisphosphate carboxylase large chain from Welwitschia mirabilis (Tree tumbo).